The sequence spans 932 residues: MVRPSSSSSASASAARSGAAKRKRNLPTATNPTTRASVAANVKGKGKTKALELDLVVSDDGEEDGELDLESDSGDDDANDDDDNDNEQDDFPEIDLEDSDDDQDVEDEDEPGAQEEVDSDNNKQASTQVHDIQVEEDDSSEEGYNSSDIDNSDFDDDADEGDLAYDSADEDERASAFAARSDASQTSIDEELSRMMSRYSSKPDEHSGSLSATNKLGIPRSQAAQAFDLRVRNPDGSAKGVFKRSEITGEMKRVYPEIDAAYDSDSSTEDPENRIGNVPLEWYDDLPHIGYDINGRKVMKPATKDELDKFLDTVDGDGEAWFSARDKSTGKDVRLSDEELAIIRKLQNAEIPDDAYDPYEDYVDWFTGEDKVMQTALSGRPEPKSRFVPSKWEHKKVMKIVRAIREGRIVPGAAANKDAKPKFYNIWADAHENDTRSPWAVMAAPKLALPGHAESYNPPAEYLFNEQEQKEWQEAEAEDRKQNFLPTKHDSLRRVGAYQNFVQERFERCLDLYLAPRMMRKKLDIHNPENLLPKLPSPKELRPFPITTSVVYVHPDGGRVRCLSVDPTGNWLVTGGDDGRARLWDVAIGRCTASWDVCEGMPKAERSAVHSIAWCPTKNYSLFTAVVHGRVAVIAPPQTQNYAKTSANAISSKSASSSSGATATSTASFLYATSAAATSMPSKPDARSPVAWTRPSEAERRTGVAMHLNITSPSAANLKTVVWHNKGDYFATVCPDSAAGSAGLLIHQLSKHRSQSPFRKASKGSSIQKLVFHPTKPWIFVATQRYIRIYDLMAQSLIKTLQSGFKWISTLDVHPSGDHLMVGSYDKKLAWFDLDLSARPYKVLKYHARAIRSVHFSTSWNLVADASDDGTLQLFYAKVGADYGENLTLVPLKVLRGHEVKNGLGVLDVKWHPNQPWLFSAGADGNALLWTT.

The segment covering 1–18 has biased composition (low complexity); the sequence is MVRPSSSSSASASAARSG. Residues 1–229 form a disordered region; sequence MVRPSSSSSA…RSQAAQAFDL (229 aa). The segment covering 27 to 36 has biased composition (polar residues); it reads PTATNPTTRA. Acidic residues-rich tracts occupy residues 57-119 and 150-172; these read VSDD…EVDS and DNSD…DEDE. Positions 175-184 are enriched in low complexity; it reads SAFAARSDAS. WD repeat units follow at residues 555-594 and 604-644; these read PDGG…CTAS and AERS…NYAK. Residues 679-698 form a disordered region; the sequence is SMPSKPDARSPVAWTRPSEA. WD repeat units lie at residues 762–800, 803–842, 846–885, and 901–932; these read SKGS…LIKT, SGFK…RPYK, YHAR…DYGE, and KNGL…LWTT.

This sequence belongs to the WD repeat BOP1/ERB1 family. In terms of assembly, component of the NOP7 complex, composed of ERB1, NOP7 and YTM1. The complex is held together by ERB1, which interacts with NOP7 via its N-terminal domain and with YTM1 via a high-affinity interaction between the seven-bladed beta-propeller domains of the 2 proteins. The NOP7 complex associates with the 66S pre-ribosome.

The protein resides in the nucleus. Its subcellular location is the nucleolus. It is found in the nucleoplasm. Component of the NOP7 complex, which is required for maturation of the 25S and 5.8S ribosomal RNAs and formation of the 60S ribosome. This chain is Ribosome biogenesis protein ERB1, found in Mycosarcoma maydis (Corn smut fungus).